Here is a 311-residue protein sequence, read N- to C-terminus: Homeobox protein knotted-1-like 10 (311 aa).

2 disordered regions span residues 1–45 (MEDL…PATT) and 153–184 (LCGG…DAAD). The span at 12-22 (SRGGGGGGGGA) shows a compositional bias: gly residues. The 21-residue stretch at 197–217 (ELKEMLLKKYSGCLSRLRSEF) folds into the ELK domain. The segment at residues 218–281 (LKKRKKGKLP…NQRKRHWKPS (64 aa)) is a DNA-binding region (homeobox; TALE-type).

Belongs to the TALE/KNOX homeobox family.

It localises to the nucleus. Probable transcription factor that may be involved in shoot formation during embryogenesis. This Oryza sativa subsp. indica (Rice) protein is Homeobox protein knotted-1-like 10 (OSH71).